We begin with the raw amino-acid sequence, 529 residues long: uncharacterized protein (529 aa).

The Radical SAM core domain maps to 157-410; it reads DFPHIICEIE…FKNRVRENID (254 aa). The [4Fe-4S] cluster site is built by cysteine 171, cysteine 176, and cysteine 179.

It depends on [4Fe-4S] cluster as a cofactor.

This is an uncharacterized protein from Archaeoglobus fulgidus (strain ATCC 49558 / DSM 4304 / JCM 9628 / NBRC 100126 / VC-16).